The following is a 183-amino-acid chain: Gamma-crystallin N (183 aa).

4 Beta/gamma crystallin 'Greek key' domains span residues 6–46, 47–89, 95–136, and 138–180; these read GKII…RVET, GAWI…KPVR, YRLE…KVYG, and GAWV…RRVV.

The protein belongs to the beta/gamma-crystallin family. In terms of assembly, monomer.

Functionally, crystallins are the dominant structural components of the vertebrate eye lens. The chain is Gamma-crystallin N (crygn) from Xenopus tropicalis (Western clawed frog).